The following is a 185-amino-acid chain: Ribosome-recycling factor (185 aa).

This sequence belongs to the RRF family.

It localises to the cytoplasm. In terms of biological role, responsible for the release of ribosomes from messenger RNA at the termination of protein biosynthesis. May increase the efficiency of translation by recycling ribosomes from one round of translation to another. This chain is Ribosome-recycling factor, found in Pseudarthrobacter chlorophenolicus (strain ATCC 700700 / DSM 12829 / CIP 107037 / JCM 12360 / KCTC 9906 / NCIMB 13794 / A6) (Arthrobacter chlorophenolicus).